Reading from the N-terminus, the 264-residue chain is Pyridoxine 5'-phosphate synthase (264 aa).

Residues 1-21 (MTDTAQILPTTLEQNPQNTSK) show a composition bias toward polar residues. Positions 1–22 (MTDTAQILPTTLEQNPQNTSKK) are disordered. Asparagine 28 is a binding site for 3-amino-2-oxopropyl phosphate. Residue 30–31 (DH) coordinates 1-deoxy-D-xylulose 5-phosphate. 3-amino-2-oxopropyl phosphate is bound at residue arginine 39. The Proton acceptor role is filled by histidine 64. 2 residues coordinate 1-deoxy-D-xylulose 5-phosphate: arginine 66 and histidine 71. Glutamate 91 functions as the Proton acceptor in the catalytic mechanism. Residue threonine 121 participates in 1-deoxy-D-xylulose 5-phosphate binding. The active-site Proton donor is the histidine 217. 3-amino-2-oxopropyl phosphate contacts are provided by residues glycine 218 and 239–240 (GH).

It belongs to the PNP synthase family. As to quaternary structure, homooctamer; tetramer of dimers.

Its subcellular location is the cytoplasm. It catalyses the reaction 3-amino-2-oxopropyl phosphate + 1-deoxy-D-xylulose 5-phosphate = pyridoxine 5'-phosphate + phosphate + 2 H2O + H(+). Its pathway is cofactor biosynthesis; pyridoxine 5'-phosphate biosynthesis; pyridoxine 5'-phosphate from D-erythrose 4-phosphate: step 5/5. Its function is as follows. Catalyzes the complicated ring closure reaction between the two acyclic compounds 1-deoxy-D-xylulose-5-phosphate (DXP) and 3-amino-2-oxopropyl phosphate (1-amino-acetone-3-phosphate or AAP) to form pyridoxine 5'-phosphate (PNP) and inorganic phosphate. This chain is Pyridoxine 5'-phosphate synthase, found in Psychrobacter cryohalolentis (strain ATCC BAA-1226 / DSM 17306 / VKM B-2378 / K5).